The chain runs to 199 residues: N-(5'-phosphoribosyl)anthranilate isomerase (199 aa).

This sequence belongs to the TrpF family.

It carries out the reaction N-(5-phospho-beta-D-ribosyl)anthranilate = 1-(2-carboxyphenylamino)-1-deoxy-D-ribulose 5-phosphate. The protein operates within amino-acid biosynthesis; L-tryptophan biosynthesis; L-tryptophan from chorismate: step 3/5. The sequence is that of N-(5'-phosphoribosyl)anthranilate isomerase from Sulfolobus acidocaldarius (strain ATCC 33909 / DSM 639 / JCM 8929 / NBRC 15157 / NCIMB 11770).